Consider the following 214-residue polypeptide: MAYTLPELGYAYDALEPHFDAMTMEIHHSKHHQAYVNNANAALENLPELAQGCPGQLLTKLAEVPADKLTAIRNNVGGHLNHSLFWKSLKKGTTLQGALKDAIVRDFGSVEAFQAEFEKAAATRFGSGWAWLVLQENGKLAVVSTANQDSPVMGKAIAGCEGYPLLGLDVWEHAYYLKFQNRRPDYIKEFWHVVNWDFVAERFEKKVEHCNCTK.

Residues His27, His82, Asp169, and His173 each coordinate Mn(2+).

It belongs to the iron/manganese superoxide dismutase family. In terms of assembly, homodimer. The cofactor is Mn(2+).

It carries out the reaction 2 superoxide + 2 H(+) = H2O2 + O2. Functionally, destroys superoxide anion radicals which are normally produced within the cells and which are toxic to biological systems. The sequence is that of Superoxide dismutase [Mn] (sodA) from Pasteurella multocida (strain Pm70).